Here is a 932-residue protein sequence, read N- to C-terminus: 3-hydroxy-3-methylglutaryl-coenzyme A reductase (932 aa).

Helical transmembrane passes span 20–40 (VIVCTLTLTICMLSMNYFTGL), 59–79 (LSSDVLVMCIMRTLAVAYLYL), 92–112 (ILGIAGLFTIFSSFLFSSAVI), 113–133 (HLFGLELTGLNEALPFFLLLI), 162–182 (MAILGPTITLDTVVTTLVISI), and 193–213 (VFCCFGILSLIANYFVFMTFF). N-linked (GlcNAc...) asparagine glycosylation is present at N279. A helical transmembrane segment spans residues 322 to 342 (ILTAILATVLASHYIFFSDLA). Positions 343–467 (TYPEKRVSIM…APRPMPELLE (125 aa)) are linker. Residues 357–367 (VVNPGSDHEDA) are compositionally biased toward basic and acidic residues. The disordered stretch occupies residues 357 to 442 (VVNPGSDHED…SGSEDEEEEV (86 aa)). Residues 374–403 (GTLSSSPSTSDVRVIESMTSRTQACQTDPV) are compositionally biased toward polar residues. The span at 406–421 (SPRNSRSSSPVSSHSV) shows a compositional bias: low complexity. The catalytic stretch occupies residues 468–932 (ILNVGKGPNA…APGTCTANAS (465 aa)). Residues E575, K707, and D783 each act as charge relay system in the active site. The N-linked (GlcNAc...) asparagine glycan is linked to N850. The active-site Proton donor is H882. The N-linked (GlcNAc...) asparagine glycan is linked to N886. S888 bears the Phosphoserine; by AMPK mark.

Belongs to the HMG-CoA reductase family.

It localises to the endoplasmic reticulum membrane. It catalyses the reaction (R)-mevalonate + 2 NADP(+) + CoA = (3S)-3-hydroxy-3-methylglutaryl-CoA + 2 NADPH + 2 H(+). The protein operates within metabolic intermediate biosynthesis; (R)-mevalonate biosynthesis; (R)-mevalonate from acetyl-CoA: step 3/3. Its function is as follows. This transmembrane glycoprotein is involved in the control of cholesterol biosynthesis. It is the rate-limiting enzyme of sterol biosynthesis. This is 3-hydroxy-3-methylglutaryl-coenzyme A reductase (HMGCR) from Strongylocentrotus purpuratus (Purple sea urchin).